The following is a 531-amino-acid chain: Peroxinectin A (531 aa).

Positions 1 to 21 (MRLNLISFFIIFTILVSISNS) are cleaved as a signal peptide. Residue Asn-62 is glycosylated (N-linked (GlcNAc...) asparagine). His-101 functions as the Proton acceptor in the catalytic mechanism. 2 N-linked (GlcNAc...) asparagine glycosylation sites follow: Asn-131 and Asn-338.

It belongs to the peroxidase family.

It localises to the secreted. The catalysed reaction is 2 a phenolic donor + H2O2 = 2 a phenolic radical donor + 2 H2O. The protein is Peroxinectin A (poxA) of Dictyostelium discoideum (Social amoeba).